The chain runs to 173 residues: Photosystem I reaction center subunit XI (173 aa).

The next 2 helical transmembrane spans lie at 92–112 and 148–168; these read LAGL…LSLY and LIGG…LGII.

The protein belongs to the PsaL family.

Its subcellular location is the cellular thylakoid membrane. This chain is Photosystem I reaction center subunit XI, found in Nostoc punctiforme (strain ATCC 29133 / PCC 73102).